Consider the following 913-residue polypeptide: DNA repair endonuclease XPF (913 aa).

The tract at residues 1–454 (MDRGISAVRK…EVWVNLRKGD (454 aa)) is helicase-like. Leucine-zipper stretches follow at residues 233-254 (LNAC…DLSL) and 270-298 (LDPL…LQYL). An N6-acetyllysine modification is found at Lys-289. The segment covering 453 to 476 (GDGPKRTMKSDKRPKDTKNKERAS) has biased composition (basic and acidic residues). 2 disordered regions span residues 453–525 (GDGP…CGGE) and 638–677 (VVPE…HNGT). A Nuclear localization signal motif is present at residues 483-488 (KRKKRE). Positions 500–509 (EPPEEGAAEE) are enriched in acidic residues. Ser-518 is modified (phosphoserine). Residues 638-649 (VVPEEREGRDET) are compositionally biased toward basic and acidic residues. Residues 655-810 (RGTVSTDAPA…PSPHATAELF (156 aa)) are nuclease. The region spanning 680 to 760 (SIVVDMREFR…RPVLLIEFDA (81 aa)) is the ERCC4 domain. The hhH2, dimerization with ERCC1 stretch occupies residues 834–902 (TLPESDKYNP…QLYDFLHTAY (69 aa)).

The protein belongs to the XPF family. As to quaternary structure, heterodimer composed of ERCC1 and ERCC4/XPF. Interacts with SLX4/BTBD12; this interaction is direct and links the ERCC1-ERCC4/XPF complex to SLX4, which may coordinate the action of the structure-specific endonuclease during DNA repair. Mg(2+) serves as cofactor.

It localises to the nucleus. The protein localises to the chromosome. Catalytic component of a structure-specific DNA repair endonuclease responsible for the 5-prime incision during DNA repair, and which is essential for nucleotide excision repair (NER) and interstrand cross-link (ICL) repair. This is DNA repair endonuclease XPF from Cricetulus griseus (Chinese hamster).